A 135-amino-acid polypeptide reads, in one-letter code: Nucleoside diphosphate kinase (135 aa).

Residues lysine 9, phenylalanine 57, arginine 85, threonine 91, arginine 102, and asparagine 112 each coordinate ATP. The active-site Pros-phosphohistidine intermediate is the histidine 115.

It belongs to the NDK family. In terms of assembly, homotetramer. The cofactor is Mg(2+).

It is found in the cytoplasm. It catalyses the reaction a 2'-deoxyribonucleoside 5'-diphosphate + ATP = a 2'-deoxyribonucleoside 5'-triphosphate + ADP. The enzyme catalyses a ribonucleoside 5'-diphosphate + ATP = a ribonucleoside 5'-triphosphate + ADP. Functionally, major role in the synthesis of nucleoside triphosphates other than ATP. The ATP gamma phosphate is transferred to the NDP beta phosphate via a ping-pong mechanism, using a phosphorylated active-site intermediate. In Thermobifida fusca (strain YX), this protein is Nucleoside diphosphate kinase.